A 771-amino-acid chain; its full sequence is Kinase suppressor of Ras A (771 aa).

The span at 152–169 (SRTSSGSTDEPSGQSTPA) shows a compositional bias: polar residues. A disordered region spans residues 152–172 (SRTSSGSTDEPSGQSTPAIVT). The Phorbol-ester/DAG-type zinc-finger motif lies at 215-269 (PHKWHRSTKFRFSGDAVCHFCQRPLGFGFLNAWEKCRSCKWKVHTQCKGRVGDSC). Disordered stretches follow at residues 290–339 (GMWK…ISGN) and 414–433 (DSTG…EAVD). Over residues 318-331 (SSSSTNSSAPSTPA) the composition is skewed to low complexity. Residues 477 to 748 (DKQAPIIGRG…TDINLKLTAL (272 aa)) form the Protein kinase domain. Residues 483–491 (IGRGRFGKV) and lysine 503 each bind ATP. The active-site Proton acceptor is aspartate 600.

It belongs to the protein kinase superfamily. TKL Ser/Thr protein kinase family. In terms of assembly, interacts with mek-2. The cofactor is Mg(2+).

The catalysed reaction is L-seryl-[protein] + ATP = O-phospho-L-seryl-[protein] + ADP + H(+). It catalyses the reaction L-threonyl-[protein] + ATP = O-phospho-L-threonyl-[protein] + ADP + H(+). Functionally, serine/threonine-protein kinase which positively regulates Ras-mediated signaling probably acting at the level of let-60/ras or/and lin-45/raf. Involved in sex myoblast migration. Plays a role in responses to M.nematophilum-mediated bacterial infection by promoting tail swelling and preventing constipation. Functions redundantly with ksr-2 in the Ras-mediated regulation of larval survival, the development of excretory canal and in mpk-1 phosphorylation in somatic cells. In addition, involved in determining vulval precursor cell fate during vulval induction independently of its kinase activity. Plays a role in egg-laying. This chain is Kinase suppressor of Ras A, found in Caenorhabditis elegans.